We begin with the raw amino-acid sequence, 277 residues long: Large ribosomal subunit protein uL2 (277 aa).

The disordered stretch occupies residues N226–K277.

The protein belongs to the universal ribosomal protein uL2 family. Part of the 50S ribosomal subunit. Forms a bridge to the 30S subunit in the 70S ribosome.

In terms of biological role, one of the primary rRNA binding proteins. Required for association of the 30S and 50S subunits to form the 70S ribosome, for tRNA binding and peptide bond formation. It has been suggested to have peptidyltransferase activity; this is somewhat controversial. Makes several contacts with the 16S rRNA in the 70S ribosome. In Rhodopseudomonas palustris (strain BisA53), this protein is Large ribosomal subunit protein uL2.